The following is a 473-amino-acid chain: Eukaryotic translation initiation factor 2 subunit gamma (473 aa).

The 211-residue stretch at 40–250 folds into the tr-type G domain; that stretch reads QATINIGTIG…AICNIAPPNY (211 aa). Positions 49 to 56 are G1; sequence GHVAHGKS. GTP is bound at residue 52-57; it reads AHGKSS. Residues 77 to 81 form a G2 region; the sequence is NITIK. The tract at residues 135–138 is G3; it reads DCPG. GTP is bound by residues 193-196 and 228-230; these read NKMD and SAQ. Positions 193–196 are G4; that stretch reads NKMD. Residues 228–230 form a G5 region; the sequence is SAQ. Positions 458-470 are interacts with CDC123; the sequence is GKVRSGGTLCEVV.

Belongs to the TRAFAC class translation factor GTPase superfamily. Classic translation factor GTPase family. EIF2G subfamily. As to quaternary structure, eukaryotic translation initiation factor 2 eIF2 is a heterotrimeric complex composed of an alpha, a beta and a gamma subunit. The factors eIF-1, eIF-2, eIF-3, TIF5/eIF-5 and methionyl-tRNAi form a multifactor complex (MFC) that may bind to the 40S ribosome.

The protein resides in the cytoplasm. It is found in the cytosol. It catalyses the reaction GTP + H2O = GDP + phosphate + H(+). Functionally, as a subunit of eukaryotic initiation factor 2 eIF2, involved in the early steps of protein synthesis. In the presence of GTP, eIF-2 forms a ternary complex with initiator tRNA Met-tRNAi and then recruits the 40S ribosomal complex and initiation factors eIF-1, eIF-1A and eIF-3 to form the 43S pre-initiation complex (43S PIC), a step that determines the rate of protein translation. The 43S PIC binds to mRNA and scans downstream to the initiation codon, where it forms a 48S initiation complex by codon-anticodon base pairing. This leads to the displacement of eIF-1 to allow GTPase-activating protein (GAP) eIF-5-mediated hydrolysis of eIF2-bound GTP. Hydrolysis of GTP and release of Pi, which makes GTP hydrolysis irreversible, causes the release of the eIF-2-GDP binary complex from the 40S subunit, an event that is essential for the subsequent joining of the 60S ribosomal subunit to form an elongation-competent 80S ribosome. In order for eIF-2 to recycle and catalyze another round of initiation, the GDP bound to eIF-2 must be exchanged with GTP by way of a reaction catalyzed by GDP-GTP exchange factor (GEF) eIF-2B. The protein is Eukaryotic translation initiation factor 2 subunit gamma of Cryptococcus neoformans var. grubii serotype A (strain H99 / ATCC 208821 / CBS 10515 / FGSC 9487) (Filobasidiella neoformans var. grubii).